A 205-amino-acid chain; its full sequence is High frequency lysogenization protein HflD homolog (205 aa).

This sequence belongs to the HflD family.

Its subcellular location is the cytoplasm. The protein localises to the cell inner membrane. This chain is High frequency lysogenization protein HflD homolog, found in Shewanella baltica (strain OS185).